Reading from the N-terminus, the 245-residue chain is MNLAEVVRFLDDFLEINSYQDVSNNGLQVEGSEEVKKVAFAVDASMESFRAAKAVNADMLVVHHGLIWGGIGYIRGIVKRRIEFLLRSNLSLYAAHLPLDAHREVGNNAVILRKIGAEPQEEFGEYKGVKIGFSAKLEKATAVGEIAEKLGPAMVLPFGEERVRKVAAVSGKGCFALNEAIDAGVELFITGEPEHEAYHLAKEGGINVFFLGHYESEKFGVQSLMEVVREKLGIEAVFLDIPTNL.

Residues H63, H64, D100, H213, and E217 each contribute to the a divalent metal cation site.

Belongs to the GTP cyclohydrolase I type 2/NIF3 family. As to quaternary structure, homohexamer.

In Archaeoglobus fulgidus (strain ATCC 49558 / DSM 4304 / JCM 9628 / NBRC 100126 / VC-16), this protein is GTP cyclohydrolase 1 type 2 homolog.